A 397-amino-acid chain; its full sequence is Adenylosuccinate synthetase (397 aa).

GTP contacts are provided by residues 11-17 (GDEGKGK) and 39-41 (GHT). The active-site Proton acceptor is the aspartate 12. Aspartate 12 and glycine 39 together coordinate Mg(2+). IMP contacts are provided by residues 12 to 15 (DEGK), 37 to 40 (NAGH), threonine 125, arginine 139, glutamine 212, threonine 227, and arginine 290. The active-site Proton donor is the histidine 40. 286 to 292 (STTGRPR) is a binding site for substrate. Residues arginine 292, 318–320 (KAD), and 386–388 (STG) contribute to the GTP site.

The protein belongs to the adenylosuccinate synthetase family. In terms of assembly, homodimer. Mg(2+) serves as cofactor.

Its subcellular location is the cytoplasm. It catalyses the reaction IMP + L-aspartate + GTP = N(6)-(1,2-dicarboxyethyl)-AMP + GDP + phosphate + 2 H(+). Its pathway is purine metabolism; AMP biosynthesis via de novo pathway; AMP from IMP: step 1/2. Functionally, plays an important role in the de novo pathway of purine nucleotide biosynthesis. Catalyzes the first committed step in the biosynthesis of AMP from IMP. The sequence is that of Adenylosuccinate synthetase from Thermotoga maritima (strain ATCC 43589 / DSM 3109 / JCM 10099 / NBRC 100826 / MSB8).